Consider the following 262-residue polypeptide: Insulin-like growth factor-binding protein 1 (262 aa).

Positions 1–25 (MPEVPAVRAWPLLLSLALQLGAAAG) are cleaved as a signal peptide. The 81-residue stretch at 28-108 (QPLHCAPCSA…TRGQGACMPA (81 aa)) folds into the IGFBP N-terminal domain. 6 disulfides stabilise this stretch: cysteine 32–cysteine 59, cysteine 35–cysteine 61, cysteine 43–cysteine 62, cysteine 50–cysteine 65, cysteine 72–cysteine 85, and cysteine 79–cysteine 105. The segment at 101–133 (GQGACMPAPSAEATETKDPAAPETTSPESTEMT) is disordered. Residues 121–131 (APETTSPESTE) are compositionally biased toward low complexity. Phosphoserine is present on residues serine 126, serine 129, and serine 147. Tyrosine 161 carries the post-translational modification Phosphotyrosine. Residues 176–254 (KEPCQRELYK…STAVRGDPKC (79 aa)) enclose the Thyroglobulin type-1 domain. 3 disulfide bridges follow: cysteine 179-cysteine 209, cysteine 220-cysteine 231, and cysteine 233-cysteine 254. Serine 245 is subject to Phosphoserine. The Cell attachment site signature appears at 249–251 (RGD).

In terms of assembly, binds equally well IGF1 and IGF2. Interacts with integrin ITGA5:ITGB1. Interacts with VHL; this interaction inhibits HIF1A degradation.

The protein resides in the secreted. Its function is as follows. Multifunctional protein that plays a critical role in regulating the availability of IGFs such as IGF1 and IGF2 to their receptors and thereby regulates IGF-mediated cellular processes including cell migration, proliferation, differentiation or apoptosis in a cell-type specific manner. Also plays a positive role in cell migration by interacting with integrin ITGA5:ITGB1 through its RGD motif. Mechanistically, binding to integrins leads to activation of focal adhesion kinase/PTK2 and stimulation of the mitogen-activated protein kinase (MAPK) pathway. Regulates cardiomyocyte apoptosis by suppressing HIF-1alpha/HIF1A degradation through ubiquitination. In Sus scrofa (Pig), this protein is Insulin-like growth factor-binding protein 1 (IGFBP1).